A 223-amino-acid chain; its full sequence is Ribosome maturation factor RimM (223 aa).

A compositionally biased stretch (low complexity) spans 1–12 (MARRPGSSSRGP). Disordered stretches follow at residues 1 to 44 (MARR…DPGL) and 204 to 223 (ADPP…DDPG). Residues 136–210 (EDEFFLTDLI…KVVADPPDDL (75 aa)) enclose the PRC barrel domain.

This sequence belongs to the RimM family. In terms of assembly, binds ribosomal protein uS19.

The protein localises to the cytoplasm. Functionally, an accessory protein needed during the final step in the assembly of 30S ribosomal subunit, possibly for assembly of the head region. Essential for efficient processing of 16S rRNA. May be needed both before and after RbfA during the maturation of 16S rRNA. It has affinity for free ribosomal 30S subunits but not for 70S ribosomes. The polypeptide is Ribosome maturation factor RimM (Methylorubrum extorquens (strain PA1) (Methylobacterium extorquens)).